The primary structure comprises 235 residues: 2-C-methyl-D-erythritol 4-phosphate cytidylyltransferase (235 aa).

Belongs to the IspD/TarI cytidylyltransferase family. IspD subfamily.

The enzyme catalyses 2-C-methyl-D-erythritol 4-phosphate + CTP + H(+) = 4-CDP-2-C-methyl-D-erythritol + diphosphate. It functions in the pathway isoprenoid biosynthesis; isopentenyl diphosphate biosynthesis via DXP pathway; isopentenyl diphosphate from 1-deoxy-D-xylulose 5-phosphate: step 2/6. Functionally, catalyzes the formation of 4-diphosphocytidyl-2-C-methyl-D-erythritol from CTP and 2-C-methyl-D-erythritol 4-phosphate (MEP). The protein is 2-C-methyl-D-erythritol 4-phosphate cytidylyltransferase of Leptospira borgpetersenii serovar Hardjo-bovis (strain L550).